The chain runs to 128 residues: Small ribosomal subunit protein uS11 (128 aa).

Belongs to the universal ribosomal protein uS11 family. As to quaternary structure, part of the 30S ribosomal subunit. Interacts with proteins S7 and S18. Binds to IF-3.

Its function is as follows. Located on the platform of the 30S subunit, it bridges several disparate RNA helices of the 16S rRNA. Forms part of the Shine-Dalgarno cleft in the 70S ribosome. This Solidesulfovibrio magneticus (strain ATCC 700980 / DSM 13731 / RS-1) (Desulfovibrio magneticus) protein is Small ribosomal subunit protein uS11.